Reading from the N-terminus, the 195-residue chain is Holliday junction branch migration complex subunit RuvA (195 aa).

The domain I stretch occupies residues 1–63 (MIASVRGEVL…EDSQTLYGFA (63 aa)). The tract at residues 64-138 (DSDARDLFLT…DKVGSSTSSG (75 aa)) is domain II. The interval 138–142 (GVAAA) is flexible linker. Residues 143–195 (GGHGIRGPVVEALVGLGFAVKQAEEATDKVLANDPEATTSSALRAALSMLGKK) form a domain III region.

Belongs to the RuvA family. As to quaternary structure, homotetramer. Forms an RuvA(8)-RuvB(12)-Holliday junction (HJ) complex. HJ DNA is sandwiched between 2 RuvA tetramers; dsDNA enters through RuvA and exits via RuvB. An RuvB hexamer assembles on each DNA strand where it exits the tetramer. Each RuvB hexamer is contacted by two RuvA subunits (via domain III) on 2 adjacent RuvB subunits; this complex drives branch migration. In the full resolvosome a probable DNA-RuvA(4)-RuvB(12)-RuvC(2) complex forms which resolves the HJ.

The protein resides in the cytoplasm. In terms of biological role, the RuvA-RuvB-RuvC complex processes Holliday junction (HJ) DNA during genetic recombination and DNA repair, while the RuvA-RuvB complex plays an important role in the rescue of blocked DNA replication forks via replication fork reversal (RFR). RuvA specifically binds to HJ cruciform DNA, conferring on it an open structure. The RuvB hexamer acts as an ATP-dependent pump, pulling dsDNA into and through the RuvAB complex. HJ branch migration allows RuvC to scan DNA until it finds its consensus sequence, where it cleaves and resolves the cruciform DNA. The sequence is that of Holliday junction branch migration complex subunit RuvA from Mycolicibacterium gilvum (strain PYR-GCK) (Mycobacterium gilvum (strain PYR-GCK)).